The primary structure comprises 414 residues: Dual-specificity RNA methyltransferase RlmN (414 aa).

A compositionally biased stretch (polar residues) spans 1–13 (MTSAVGISVPNTD). A disordered region spans residues 1 to 22 (MTSAVGISVPNTDAQSSQSASQ). E124 serves as the catalytic Proton acceptor. The Radical SAM core domain maps to 134 to 377 (TGSRKTLCIS…CTIRQTRGDD (244 aa)). The cysteines at positions 141 and 382 are disulfide-linked. Residues C148, C152, and C155 each coordinate [4Fe-4S] cluster. Residues 204–205 (GE), S236, 258–260 (SLH), and N339 each bind S-adenosyl-L-methionine. C382 functions as the S-methylcysteine intermediate in the catalytic mechanism.

The protein belongs to the radical SAM superfamily. RlmN family. Requires [4Fe-4S] cluster as cofactor.

Its subcellular location is the cytoplasm. It carries out the reaction adenosine(2503) in 23S rRNA + 2 reduced [2Fe-2S]-[ferredoxin] + 2 S-adenosyl-L-methionine = 2-methyladenosine(2503) in 23S rRNA + 5'-deoxyadenosine + L-methionine + 2 oxidized [2Fe-2S]-[ferredoxin] + S-adenosyl-L-homocysteine. It catalyses the reaction adenosine(37) in tRNA + 2 reduced [2Fe-2S]-[ferredoxin] + 2 S-adenosyl-L-methionine = 2-methyladenosine(37) in tRNA + 5'-deoxyadenosine + L-methionine + 2 oxidized [2Fe-2S]-[ferredoxin] + S-adenosyl-L-homocysteine. In terms of biological role, specifically methylates position 2 of adenine 2503 in 23S rRNA and position 2 of adenine 37 in tRNAs. m2A2503 modification seems to play a crucial role in the proofreading step occurring at the peptidyl transferase center and thus would serve to optimize ribosomal fidelity. In Acinetobacter baylyi (strain ATCC 33305 / BD413 / ADP1), this protein is Dual-specificity RNA methyltransferase RlmN.